Consider the following 329-residue polypeptide: Carrier protein YMC2, mitochondrial (329 aa).

Residues Met1–Arg27 are disordered. Residues Met1–Arg33 constitute a mitochondrion transit peptide. 3 Solcar repeats span residues Val34–Phe115, Ser143–Arg226, and Pro238–Phe325. The next 6 membrane-spanning stretches (helical) occupy residues Ile38 to Thr58, Val84 to Val104, Leu140 to Ala160, Thr205 to Ala225, Cys243 to Val263, and Phe297 to Thr318.

This sequence belongs to the mitochondrial carrier (TC 2.A.29) family.

The protein resides in the mitochondrion inner membrane. The polypeptide is Carrier protein YMC2, mitochondrial (YMC2) (Saccharomyces cerevisiae (strain ATCC 204508 / S288c) (Baker's yeast)).